A 270-amino-acid polypeptide reads, in one-letter code: Co-chaperone protein DjlA (270 aa).

Over 1–6 (MNWIGK) the chain is Periplasmic. The chain crosses the membrane as a helical span at residues 7–30 (LIGMMLGFILAGPIGLIIGLFIGH). Topologically, residues 31–270 (VVFDQGRFRQ…EQIRKVRSMV (240 aa)) are cytoplasmic. One can recognise a J domain in the interval 204 to 270 (DAYKVLGLTS…EQIRKVRSMV (67 aa)).

Homodimer.

Its subcellular location is the cell inner membrane. Functionally, regulatory DnaK co-chaperone. Direct interaction between DnaK and DjlA is needed for the induction of the wcaABCDE operon, involved in the synthesis of a colanic acid polysaccharide capsule, possibly through activation of the RcsB/RcsC phosphotransfer signaling pathway. The colanic acid capsule may help the bacterium survive conditions outside the host. The polypeptide is Co-chaperone protein DjlA (Coxiella burnetii (strain RSA 493 / Nine Mile phase I)).